Here is a 460-residue protein sequence, read N- to C-terminus: Bifunctional protein GlmU (460 aa).

Positions 1 to 229 (MTNYAIILAA…FNESLGVNDR (229 aa)) are pyrophosphorylase. Residues 8–11 (LAAG), K22, Q72, and 77–78 (GT) contribute to the UDP-N-acetyl-alpha-D-glucosamine site. Position 102 (D102) interacts with Mg(2+). Positions 139, 154, 169, and 227 each coordinate UDP-N-acetyl-alpha-D-glucosamine. Position 227 (N227) interacts with Mg(2+). Positions 230–250 (VALAIAETVMRQRITQKHMVN) are linker. Residues 251–460 (GVTFQNPETV…RLAHHPSRSK (210 aa)) form an N-acetyltransferase region. UDP-N-acetyl-alpha-D-glucosamine is bound by residues R332 and K350. Catalysis depends on H362, which acts as the Proton acceptor. 2 residues coordinate UDP-N-acetyl-alpha-D-glucosamine: Y365 and N376. Residues A379, 385–386 (NY), S404, A422, and R439 each bind acetyl-CoA.

This sequence in the N-terminal section; belongs to the N-acetylglucosamine-1-phosphate uridyltransferase family. It in the C-terminal section; belongs to the transferase hexapeptide repeat family. As to quaternary structure, homotrimer. It depends on Mg(2+) as a cofactor.

Its subcellular location is the cytoplasm. The enzyme catalyses alpha-D-glucosamine 1-phosphate + acetyl-CoA = N-acetyl-alpha-D-glucosamine 1-phosphate + CoA + H(+). The catalysed reaction is N-acetyl-alpha-D-glucosamine 1-phosphate + UTP + H(+) = UDP-N-acetyl-alpha-D-glucosamine + diphosphate. Its pathway is nucleotide-sugar biosynthesis; UDP-N-acetyl-alpha-D-glucosamine biosynthesis; N-acetyl-alpha-D-glucosamine 1-phosphate from alpha-D-glucosamine 6-phosphate (route II): step 2/2. The protein operates within nucleotide-sugar biosynthesis; UDP-N-acetyl-alpha-D-glucosamine biosynthesis; UDP-N-acetyl-alpha-D-glucosamine from N-acetyl-alpha-D-glucosamine 1-phosphate: step 1/1. It participates in bacterial outer membrane biogenesis; LPS lipid A biosynthesis. Catalyzes the last two sequential reactions in the de novo biosynthetic pathway for UDP-N-acetylglucosamine (UDP-GlcNAc). The C-terminal domain catalyzes the transfer of acetyl group from acetyl coenzyme A to glucosamine-1-phosphate (GlcN-1-P) to produce N-acetylglucosamine-1-phosphate (GlcNAc-1-P), which is converted into UDP-GlcNAc by the transfer of uridine 5-monophosphate (from uridine 5-triphosphate), a reaction catalyzed by the N-terminal domain. This chain is Bifunctional protein GlmU, found in Streptococcus pyogenes serotype M1.